We begin with the raw amino-acid sequence, 493 residues long: Inosine-5'-monophosphate dehydrogenase (493 aa).

2 consecutive CBS domains span residues 97 to 155 and 159 to 219; these read VIID…NAPI and MTSE…AKDE. NAD(+) contacts are provided by residues Asp253 and 303–305; that span reads GIG. K(+) is bound by residues Gly305 and Gly307. Ser308 lines the IMP pocket. Cys310 provides a ligand contact to K(+). Residue Cys310 is the Thioimidate intermediate of the active site. IMP-binding positions include 343-345, 366-367, and 390-394; these read DGG, GS, and YRGMG. Arg406 functions as the Proton acceptor in the catalytic mechanism. An IMP-binding site is contributed by Glu421. K(+) is bound by residues Glu475, Ser476, and His477.

The protein belongs to the IMPDH/GMPR family. In terms of assembly, homotetramer. The cofactor is K(+).

It catalyses the reaction IMP + NAD(+) + H2O = XMP + NADH + H(+). Its pathway is purine metabolism; XMP biosynthesis via de novo pathway; XMP from IMP: step 1/1. With respect to regulation, mycophenolic acid (MPA) is a non-competitive inhibitor that prevents formation of the closed enzyme conformation by binding to the same site as the amobile flap. In contrast, mizoribine monophosphate (MZP) is a competitive inhibitor that induces the closed conformation. MPA is a potent inhibitor of mammalian IMPDHs but a poor inhibitor of the bacterial enzymes. MZP is a more potent inhibitor of bacterial IMPDH. Its function is as follows. Catalyzes the conversion of inosine 5'-phosphate (IMP) to xanthosine 5'-phosphate (XMP), the first committed and rate-limiting step in the de novo synthesis of guanine nucleotides, and therefore plays an important role in the regulation of cell growth. The polypeptide is Inosine-5'-monophosphate dehydrogenase (Streptococcus pyogenes serotype M1).